We begin with the raw amino-acid sequence, 105 residues long: Cell division protein FtsB (105 aa).

Over M1–I3 the chain is Cytoplasmic. Residues V4–L21 form a helical membrane-spanning segment. Over G22–Q105 the chain is Periplasmic. Positions M32–L60 form a coiled coil.

It belongs to the FtsB family. As to quaternary structure, part of a complex composed of FtsB, FtsL and FtsQ.

The protein resides in the cell inner membrane. Its function is as follows. Essential cell division protein. May link together the upstream cell division proteins, which are predominantly cytoplasmic, with the downstream cell division proteins, which are predominantly periplasmic. This Polynucleobacter asymbioticus (strain DSM 18221 / CIP 109841 / QLW-P1DMWA-1) (Polynucleobacter necessarius subsp. asymbioticus) protein is Cell division protein FtsB.